Reading from the N-terminus, the 753-residue chain is Nuclear hormone receptor family member daf-12 (753 aa).

Residues 1–109 form a disordered region; that stretch reads MGTNGGVIAE…PDDGLLDSSE (109 aa). A compositionally biased stretch (basic and acidic residues) spans 20–29; sequence NPDKVEEPVV. Positions 30–44 are enriched in basic residues; it reads RRKRVTRRRHRRIHS. Residues 115-190 constitute a DNA-binding region (nuclear receptor); sequence QKTCRVCGDH…VGMKKEWILN (76 aa). 2 consecutive NR C4-type zinc fingers follow at residues 118 to 138 and 154 to 173; these read CRVC…CESC and CPYS…CQKC. The short motif at 191–206 is the Nuclear localization signal element; it reads EEQLRRRKNSRLNNTG. 3 disordered regions span residues 198-251, 266-314, and 376-410; these read KNSR…TINP, NAMP…GYDP, and GHPM…EKNH. Over residues 201–211 the composition is skewed to polar residues; that stretch reads RLNNTGTCNKR. Over residues 212 to 227 the composition is skewed to low complexity; it reads SQPGNQQSPQGPNQQP. 2 stretches are compositionally biased toward polar residues: residues 285–301 and 394–410; these read PVGS…SLTM and MSLS…EKNH. Residues 516-753 form the NR LBD domain; it reads AELKALDAVR…ELPGEFFKIK (238 aa).

Belongs to the nuclear hormone receptor family. Interacts with din-1 isoform d. Expressed throughout muscles of the pharynx. Expressed in epidermal seam cells, the vulva, head neurons, mature spermatheca, uterus and intestine.

It is found in the nucleus. Functionally, nuclear receptor which binds directly to response elements in target gene promoters. Activity is modulated by binding of steroid hormone ligands that include dafachronic acids. Regulates expression of genes involved in postembryonic development and the dauer diapause, in response to environmental cues. Inhibits the expression of let-7 family members when bound to corepressor din-1s which is an isoform of din-1. Plays a role in controlling the timing of seam cell development during the larval stages. Has a role in the immune response to bacterial infection, via regulation of let-7 miRNAs. Controls expression of genes that promote the aerobic catabolism of fatty acids for reproductive growth. May be involved in thermotolerance. This Caenorhabditis elegans protein is Nuclear hormone receptor family member daf-12.